Reading from the N-terminus, the 240-residue chain is UDP-2,3-diacylglucosamine hydrolase (240 aa).

The Mn(2+) site is built by aspartate 8, histidine 10, aspartate 41, asparagine 79, and histidine 114. 79–80 contributes to the substrate binding site; the sequence is NR. Substrate is bound by residues aspartate 122, serine 160, asparagine 164, lysine 167, and histidine 195. Mn(2+)-binding residues include histidine 195 and histidine 197.

It belongs to the LpxH family. Mn(2+) serves as cofactor.

The protein localises to the cell inner membrane. It catalyses the reaction UDP-2-N,3-O-bis[(3R)-3-hydroxytetradecanoyl]-alpha-D-glucosamine + H2O = 2-N,3-O-bis[(3R)-3-hydroxytetradecanoyl]-alpha-D-glucosaminyl 1-phosphate + UMP + 2 H(+). Its pathway is glycolipid biosynthesis; lipid IV(A) biosynthesis; lipid IV(A) from (3R)-3-hydroxytetradecanoyl-[acyl-carrier-protein] and UDP-N-acetyl-alpha-D-glucosamine: step 4/6. Hydrolyzes the pyrophosphate bond of UDP-2,3-diacylglucosamine to yield 2,3-diacylglucosamine 1-phosphate (lipid X) and UMP by catalyzing the attack of water at the alpha-P atom. Involved in the biosynthesis of lipid A, a phosphorylated glycolipid that anchors the lipopolysaccharide to the outer membrane of the cell. This Shigella boydii serotype 18 (strain CDC 3083-94 / BS512) protein is UDP-2,3-diacylglucosamine hydrolase.